The chain runs to 273 residues: Formamidopyrimidine-DNA glycosylase (273 aa).

Pro-2 (schiff-base intermediate with DNA) is an active-site residue. The active-site Proton donor is Glu-3. Lys-57 acts as the Proton donor; for beta-elimination activity in catalysis. DNA contacts are provided by His-91, Arg-110, and Lys-151. An FPG-type zinc finger spans residues Gln-236–Met-270. Catalysis depends on Arg-260, which acts as the Proton donor; for delta-elimination activity.

This sequence belongs to the FPG family. In terms of assembly, monomer. Zn(2+) serves as cofactor.

It carries out the reaction Hydrolysis of DNA containing ring-opened 7-methylguanine residues, releasing 2,6-diamino-4-hydroxy-5-(N-methyl)formamidopyrimidine.. It catalyses the reaction 2'-deoxyribonucleotide-(2'-deoxyribose 5'-phosphate)-2'-deoxyribonucleotide-DNA = a 3'-end 2'-deoxyribonucleotide-(2,3-dehydro-2,3-deoxyribose 5'-phosphate)-DNA + a 5'-end 5'-phospho-2'-deoxyribonucleoside-DNA + H(+). Its function is as follows. Involved in base excision repair of DNA damaged by oxidation or by mutagenic agents. Acts as a DNA glycosylase that recognizes and removes damaged bases. Has a preference for oxidized purines, such as 7,8-dihydro-8-oxoguanine (8-oxoG). Has AP (apurinic/apyrimidinic) lyase activity and introduces nicks in the DNA strand. Cleaves the DNA backbone by beta-delta elimination to generate a single-strand break at the site of the removed base with both 3'- and 5'-phosphates. The chain is Formamidopyrimidine-DNA glycosylase from Actinobacillus pleuropneumoniae serotype 5b (strain L20).